Consider the following 439-residue polypeptide: Ribosomal protein uS12 methylthiotransferase RimO (439 aa).

One can recognise an MTTase N-terminal domain in the interval 4 to 114 (PKVGFVSLGC…VVRAVHGVAP (111 aa)). [4Fe-4S] cluster-binding residues include Cys-13, Cys-49, Cys-78, Cys-147, Cys-151, and Cys-154. A Radical SAM core domain is found at 133-370 (LTPRHYAYLK…MEHQQAISTA (238 aa)). The region spanning 373 to 439 (STRVGREIDV…EYDLWGERIA (67 aa)) is the TRAM domain.

Belongs to the methylthiotransferase family. RimO subfamily. Requires [4Fe-4S] cluster as cofactor.

The protein localises to the cytoplasm. It catalyses the reaction L-aspartate(89)-[ribosomal protein uS12]-hydrogen + (sulfur carrier)-SH + AH2 + 2 S-adenosyl-L-methionine = 3-methylsulfanyl-L-aspartate(89)-[ribosomal protein uS12]-hydrogen + (sulfur carrier)-H + 5'-deoxyadenosine + L-methionine + A + S-adenosyl-L-homocysteine + 2 H(+). Its function is as follows. Catalyzes the methylthiolation of an aspartic acid residue of ribosomal protein uS12. The sequence is that of Ribosomal protein uS12 methylthiotransferase RimO from Bordetella parapertussis (strain 12822 / ATCC BAA-587 / NCTC 13253).